We begin with the raw amino-acid sequence, 496 residues long: Glutamyl-tRNA(Gln) amidotransferase subunit A (496 aa).

Active-site charge relay system residues include K75 and S150. The active-site Acyl-ester intermediate is the S174.

The protein belongs to the amidase family. GatA subfamily. In terms of assembly, heterotrimer of A, B and C subunits.

It carries out the reaction L-glutamyl-tRNA(Gln) + L-glutamine + ATP + H2O = L-glutaminyl-tRNA(Gln) + L-glutamate + ADP + phosphate + H(+). In terms of biological role, allows the formation of correctly charged Gln-tRNA(Gln) through the transamidation of misacylated Glu-tRNA(Gln) in organisms which lack glutaminyl-tRNA synthetase. The reaction takes place in the presence of glutamine and ATP through an activated gamma-phospho-Glu-tRNA(Gln). The chain is Glutamyl-tRNA(Gln) amidotransferase subunit A from Burkholderia pseudomallei (strain 1106a).